We begin with the raw amino-acid sequence, 1427 residues long: DNA-directed RNA polymerase subunit beta' (1427 aa).

Zn(2+)-binding residues include Cys70, Cys72, Cys85, and Cys88. Mg(2+)-binding residues include Asp461, Asp463, and Asp465. Positions 810, 884, 891, and 894 each coordinate Zn(2+). Disordered stretches follow at residues 1044-1065 (QTDE…AGRG) and 1394-1427 (PEAA…GDEA).

It belongs to the RNA polymerase beta' chain family. The RNAP catalytic core consists of 2 alpha, 1 beta, 1 beta' and 1 omega subunit. When a sigma factor is associated with the core the holoenzyme is formed, which can initiate transcription. Requires Mg(2+) as cofactor. Zn(2+) serves as cofactor.

The catalysed reaction is RNA(n) + a ribonucleoside 5'-triphosphate = RNA(n+1) + diphosphate. DNA-dependent RNA polymerase catalyzes the transcription of DNA into RNA using the four ribonucleoside triphosphates as substrates. The chain is DNA-directed RNA polymerase subunit beta' from Novosphingobium aromaticivorans (strain ATCC 700278 / DSM 12444 / CCUG 56034 / CIP 105152 / NBRC 16084 / F199).